Reading from the N-terminus, the 160-residue chain is Ribosomal RNA large subunit methyltransferase H (160 aa).

S-adenosyl-L-methionine is bound by residues leucine 76, glycine 108, and 127–132; that span reads LGKLTW.

It belongs to the RNA methyltransferase RlmH family. As to quaternary structure, homodimer.

It is found in the cytoplasm. The enzyme catalyses pseudouridine(1915) in 23S rRNA + S-adenosyl-L-methionine = N(3)-methylpseudouridine(1915) in 23S rRNA + S-adenosyl-L-homocysteine + H(+). In terms of biological role, specifically methylates the pseudouridine at position 1915 (m3Psi1915) in 23S rRNA. This Agrobacterium fabrum (strain C58 / ATCC 33970) (Agrobacterium tumefaciens (strain C58)) protein is Ribosomal RNA large subunit methyltransferase H.